Here is a 177-residue protein sequence, read N- to C-terminus: MSRFQRLTKYVAIGGGAALLLAGAAYLAGAKVNTTKSIPVGLYWKSNAPVEKGAYVMFCPPQVGVFSDAKERGYIAGGFCPGDYGYMMKRVLAAKGDEVAITDAGVRVNGGLLPHSALIKADPSGRPLPRYQSDSYTLGTAEVLLMSDVSDTSFDGRYFGPVNRSQIITVIRPVLTW.

The signal sequence occupies residues 1–30 (MSRFQRLTKYVAIGGGAALLLAGAAYLAGA).

It belongs to the peptidase S26C family.

Its subcellular location is the periplasm. In terms of biological role, required for donor-specific phage sensitivity. May be involved in pilus assembly. This chain is Plasmid transfer protein TraF (traF), found in Escherichia coli.